The sequence spans 296 residues: NAD kinase (296 aa).

D73 functions as the Proton acceptor in the catalytic mechanism. NAD(+) is bound by residues 73-74 (DG), K78, 151-152 (NE), R178, D180, and 191-196 (TAHAMS).

This sequence belongs to the NAD kinase family. A divalent metal cation is required as a cofactor.

The protein localises to the cytoplasm. The catalysed reaction is NAD(+) + ATP = ADP + NADP(+) + H(+). Involved in the regulation of the intracellular balance of NAD and NADP, and is a key enzyme in the biosynthesis of NADP. Catalyzes specifically the phosphorylation on 2'-hydroxyl of the adenosine moiety of NAD to yield NADP. This is NAD kinase from Francisella tularensis subsp. tularensis (strain FSC 198).